Here is a 5104-residue protein sequence, read N- to C-terminus: Malformin synthetase mlfA (5104 aa).

The adenylation 1 stretch occupies residues 225 to 616 (ERHAVNRPHS…CGRADTQVKL (392 aa)). Positions 757–830 (SRLEQEIQLA…EAASLAEVQE (74 aa)) constitute a Carrier 1 domain. At Ser791 the chain carries O-(pantetheine 4'-phosphoryl)serine. A condensation 1 region spans residues 868–1299 (EDVFPCTTMQ…ALNTLSLLQA (432 aa)). The segment at 1327–1716 (DRWVTRQPEG…GRKDTQVKLR (390 aa)) is adenylation 2. The region spanning 1854–1931 (TPASELERTL…QLAAEFGGPA (78 aa)) is the Carrier 2 domain. Ser1891 is subject to O-(pantetheine 4'-phosphoryl)serine. Disordered stretches follow at residues 1928 to 1961 (GGPA…DGVD) and 1998 to 2025 (TNKT…KVDS). Low complexity-rich tracts occupy residues 1934–1958 (SASS…STND) and 2003–2013 (SVSSSSSSSSS). Residues 2066 to 2481 (EDIYPATPLQ…TVSYSDKEAL (416 aa)) are condensation 2. The interval 2504–2896 (VRTPHAPAVC…IGRRDGQLKL (393 aa)) is adenylation 3. The region spanning 3032–3108 (RPVTSQEREM…QLICHLNTIR (77 aa)) is the Carrier 3 domain. Ser3069 is subject to O-(pantetheine 4'-phosphoryl)serine. 2 condensation regions span residues 3125 to 3590 (WVAL…TYDQ) and 3611 to 4029 (NIYP…EQLV). The adenylation 4 stretch occupies residues 4054–4444 (HSSREAVCAW…VGRKDNQIKF (391 aa)). Positions 4578–4654 (MPSTAAERKM…DLSDQARSLI (77 aa)) constitute a Carrier 4 domain. Ser4615 is subject to O-(pantetheine 4'-phosphoryl)serine. Residues 4691–5018 (DVLPTTSFQR…LQTIVQHQNN (328 aa)) are condensation 5.

The protein belongs to the NRP synthetase family.

The protein operates within secondary metabolite biosynthesis. In terms of biological role, nonribosomal peptide synthetase; part of the gene cluster that mediates the biosynthesis of malformins, cyclic pentapeptides with a disulfide bond between 2 consecutive cysteins, that show potential anti-tumor as well as antimalarial and antitrypanosomal properties. The nonribosomal peptide synthetase mlfA is responsible of the formation of the cyclic pentapeptide. The malformin biosynthesis clusters in malformin-producing fungi also contain enzymes involved in the formation of the disulfide bond between the two consecutive cysteins within malformins, in addition to additional tailoring enzymes such as methyltransferases or oxidoreductases. They are also composed of up to 4 major facilitator superfamily transporters, and transcription factors probably involved in the regulation of the expression of those clusters. This chain is Malformin synthetase mlfA, found in Aspergillus vadensis (strain CBS 113365 / IMI 142717 / IBT 24658).